A 96-amino-acid chain; its full sequence is YcgL domain-containing protein VS_0884 (96 aa).

A YcgL domain is found at 1-84 (MLCSIYKSSK…PPVNELELHK (84 aa)).

This Vibrio atlanticus (strain LGP32) (Vibrio splendidus (strain Mel32)) protein is YcgL domain-containing protein VS_0884.